Consider the following 181-residue polypeptide: Ras-like protein 1 (181 aa).

Residue 10–17 (GAGGVGKS) participates in GTP binding. Positions 32 to 40 (YDPTIEDSY) match the Effector region motif. GTP is bound by residues 57–61 (DTAGQ) and 116–119 (NKCD). A Cysteine methyl ester modification is found at Cys-178. Cys-178 carries S-geranylgeranyl cysteine lipidation. Positions 179–181 (KML) are cleaved as a propeptide — removed in mature form.

This sequence belongs to the small GTPase superfamily. Ras family.

The protein localises to the cell membrane. It carries out the reaction GTP + H2O = GDP + phosphate + H(+). With respect to regulation, alternates between an inactive form bound to GDP and an active form bound to GTP. Activated by a guanine nucleotide-exchange factor (GEF) and inactivated by a GTPase-activating protein (GAP). Its function is as follows. Ras proteins bind GDP/GTP and possess intrinsic GTPase activity. Plays a role in eye development by regulating cell growth, survival of postmitotic ommatidial cells and differentiation of photoreceptor cells. During larval development, mediates Ptth/tor signaling leading to the production of ecdysone, a hormone required for the initiation of metamorphosis. This is Ras-like protein 1 from Drosophila mojavensis (Fruit fly).